Here is a 3412-residue protein sequence, read N- to C-terminus: Genome polyprotein (3412 aa).

The tract at residues 1–30 (MAGKAILKGKGGGPPRRVSKETAKKTRQSR) is disordered. The Cytoplasmic portion of the chain corresponds to 1–98 (MAGKAILKGK…LQRRGKRRSA (98 aa)). The propeptide at 97–117 (SAVDWTGWLLVVVLLGVTLAA) is ER anchor for the capsid protein C, removed in mature form by serine protease NS3. The helical transmembrane segment at 99 to 119 (VDWTGWLLVVVLLGVTLAATV) threads the bilayer. The Extracellular segment spans residues 120–242 (RKERDGTTVI…HLTRVEGWVW (123 aa)). N144 carries an N-linked (GlcNAc...) asparagine; by host glycan. The chain crosses the membrane as a helical span at residues 243 to 260 (KNKVLTLAVIAVVWLTVE). Residue S261 is a topological domain, cytoplasmic. A helical transmembrane segment spans residues 262–280 (VVTRVAVVVVLLCLAPVYA). The Extracellular portion of the chain corresponds to 281–727 (SRCTHLENRD…HTVLGGAFNS (447 aa)). 6 cysteine pairs are disulfide-bonded: C283–C310, C340–C396, C340–C401, C354–C385, C372–C396, and C372–C401. Residues 378 to 391 (DRGWGNHCGLFGKG) form a fusion peptide region. N-linked (GlcNAc...) asparagine; by host glycosylation occurs at N434. Disulfide bonds link C466–C570 and C587–C618. The chain crosses the membrane as a helical span at residues 728–748 (LFGGVGFLPKILVGVVLAWLG). Over 749–755 (LNMRNPT) the chain is Cytoplasmic. The helical transmembrane segment at 756 to 776 (MSMSFLLAGGLVLAMTLGVGA) threads the bilayer. The Extracellular portion of the chain corresponds to 777-1187 (DVGCAVDTER…LVKIESLVRY (411 aa)). 6 disulfides stabilise this stretch: C780/C791, C831/C920, C955/C1000, C1057/C1106, C1068/C1090, and C1089/C1093. 3 N-linked (GlcNAc...) asparagine; by host glycosylation sites follow: N861, N983, and N999. Residues 1188-1208 (VVAVGITFHLELGPEIVALTL) form a helical membrane-spanning segment. Topologically, residues 1209-1236 (LQAVFELRVGLLSAFALRSNLTVREMVT) are cytoplasmic. The helical transmembrane segment at 1237–1257 (IYFLLLVLELGLPSEGLGALW) threads the bilayer. Over 1258 to 1293 (KWGDALAMGALIFRACTAEEKTGVGLLLMALMTQQD) the chain is Lumenal. Residues 1294 to 1314 (LATVHYGLMLFLGVASCCSIW) traverse the membrane as a helical segment. The Cytoplasmic portion of the chain corresponds to 1315–1327 (KLIRGHREQKGLT). The helical transmembrane segment at 1328-1348 (WIVPLAGLLGGEGSGVRLVAF) threads the bilayer. The Cytoplasmic portion of the chain corresponds to 1349–1359 (WELTVHGRRRS). A helical transmembrane segment spans residues 1360–1378 (FSEPLTVVGVMLTLASGMI). Over 1379 to 1382 (RHTS) the chain is Lumenal. A helical transmembrane segment spans residues 1383-1403 (QEALCALAVASFLLLMLVLGT). The Cytoplasmic segment spans residues 1404 to 1454 (RKMQLVAEWSGCVEWHPELMNEGGEVSLRVRQDSMGNFHLTELEKEERVMA). The interval 1410-1449 (AEWSGCVEWHPELMNEGGEVSLRVRQDSMGNFHLTELEKE) is interacts with and activates NS3 protease. An intramembrane region (helical) is located at residues 1455 to 1475 (FWLLAGLAASAFHWSGILGVM). Residues 1476-2160 (GLWTLSEMLR…KMAERDAPEA (685 aa)) are Cytoplasmic-facing. A Peptidase S7 domain is found at 1490–1669 (SGLVFSGQGG…EAEKSRPNLP (180 aa)). Catalysis depends on charge relay system; for serine protease NS3 activity residues H1543, D1567, and S1627. The region spanning 1675–1831 (TGWTAKGQIT…ESNGAISSEE (157 aa)) is the Helicase ATP-binding domain. Position 1688–1695 (1688–1695 (MHPGSGKT)) interacts with ATP. A DEAH box motif is present at residues 1779–1782 (DEAH). The Helicase C-terminal domain occupies 1841–2000 (DGFDWITEYE…TLRGPVATFY (160 aa)). K1883 is subject to N6-acetyllysine; by host. Residues 2161–2181 (FLTVVEMMVLGLATLGVVWCF) form a helical membrane-spanning segment. Over 2182 to 2189 (VVRTSISR) the chain is Lumenal. The segment at residues 2190 to 2210 (MMLGTLVLLASLALLWAGGVS) is an intramembrane region (helical). Position 2211 (Y2211) is a topological domain, lumenal. Residues 2212–2232 (GNMAGVALIFYTLLTVLQPEA) form a helical membrane-spanning segment. Residues 2233–2244 (GKQRSSDDNKLA) lie on the Cytoplasmic side of the membrane. A helical membrane pass occupies residues 2245–2265 (YFLLTLCSLAGLVAANEMGFL). Residues 2266-2299 (EKTKADLSTVLWSEHEELRSWEEWTNIDIQPARS) are Lumenal-facing. An intramembrane region (helical) is located at residues 2300–2320 (WGTYVLVVSLFTPYIIHQLQT). At 2321–2343 (KIQQLVNSAVATGAQAMRDLGGG) the chain is on the lumenal side. The helical intramembrane region spans 2344–2364 (APFFGVAGHVMALGVVSLVGA). The Lumenal segment spans residues 2365–2368 (TPTS). The helical transmembrane segment at 2369–2389 (LVVGVGLAAFHLAIVVSGLEA) threads the bilayer. The Cytoplasmic segment spans residues 2390–2430 (ELTQRAHKVFFSAMVRNPMVDGDVINPFGEGEAKPALYERK). Residues 2431–2451 (MSLVLAIVLCLMSVVMNRTVP) traverse the membrane as a helical segment. Topologically, residues 2452-2476 (STPRLLLWDWRQRDNCSNQRRTPFG) are lumenal. The helical transmembrane segment at 2477-2497 (RCQACGLSGVVRGSLWGFCPL) threads the bilayer. The Cytoplasmic portion of the chain corresponds to 2498–3412 (GHRLWLRASG…WESKLESSII (915 aa)). Positions 2511-2775 (GGSEGDTLGD…ELDLGVGTRC (265 aa)) constitute an mRNA cap 0-1 NS5-type MT domain. S2566 contributes to the S-adenosyl-L-methionine binding site. S2566 carries the post-translational modification Phosphoserine. The active-site For 2'-O-MTase activity is K2571. S-adenosyl-L-methionine contacts are provided by G2596, W2597, I2615, D2641, and V2642. The active-site For 2'-O-MTase activity is the D2656. I2657 provides a ligand contact to S-adenosyl-L-methionine. Residues K2693 and E2729 each act as for 2'-O-MTase activity in the active site. Residues 2729–2733 (EMYYS) form an interaction with host SCRIB region. Y2731 provides a ligand contact to S-adenosyl-L-methionine. Zn(2+) contacts are provided by E2948, H2952, C2957, and C2960. The 150-residue stretch at 3038–3187 (GLFYADDTAG…RPVDDRFSGA (150 aa)) folds into the RdRp catalytic domain. Residues H3222, C3238, and C3357 each coordinate Zn(2+).

The protein in the N-terminal section; belongs to the class I-like SAM-binding methyltransferase superfamily. mRNA cap 0-1 NS5-type methyltransferase family. In terms of assembly, homodimer. Interacts (via N-terminus) with host EXOC1 (via C-terminus); this interaction results in EXOC1 degradation through the proteasome degradation pathway. Forms heterodimers with envelope protein E in the endoplasmic reticulum and Golgi. As to quaternary structure, homodimer; in the endoplasmic reticulum and Golgi. Interacts with protein prM. Interacts with non-structural protein 1. In terms of assembly, homodimer; Homohexamer when secreted. Interacts with envelope protein E. Interacts (via N-terminus) with serine protease NS3. As to quaternary structure, forms a heterodimer with serine protease NS3. May form homooligomers. In terms of assembly, forms a heterodimer with NS2B. Interacts with non-structural protein 2A (via N-terminus). Interacts with NS4B. Interacts with unphosphorylated RNA-directed RNA polymerase NS5; this interaction stimulates RNA-directed RNA polymerase NS5 guanylyltransferase activity. Interacts with serine protease NS3. Interacts with NS1. As to quaternary structure, homodimer. Interacts with host STAT2; this interaction inhibits the phosphorylation of the latter, and, when all viral proteins are present (polyprotein), targets STAT2 for degradation. Interacts with serine protease NS3. Interacts with host SCRIB; this interaction targets NS5 to the cell membrane periphery and nucleus, thereby allowing efficient host nuclear STAT1 inhibition. Post-translationally, specific enzymatic cleavages in vivo yield mature proteins. Cleavages in the lumen of endoplasmic reticulum are performed by host signal peptidase, whereas cleavages in the cytoplasmic side are performed by serine protease NS3. Signal cleavage at the 2K-4B site requires a prior NS3 protease-mediated cleavage at the 4A-2K site. Cleaved in post-Golgi vesicles by a host furin, releasing the mature small envelope protein M, and peptide pr. This cleavage is incomplete as up to 30% of viral particles still carry uncleaved prM. In terms of processing, N-glycosylated. Post-translationally, N-glycosylated. The excreted form is glycosylated and this is required for efficient secretion of the protein from infected cells. Acetylated by host KAT5. Acetylation modulates NS3 RNA-binding and unwinding activities and plays an important positive role for viral replication. In terms of processing, phosphorylated on serines residues. This phosphorylation may trigger NS5 nuclear localization.

The protein resides in the virion. It is found in the host nucleus. The protein localises to the host cytoplasm. Its subcellular location is the host perinuclear region. It localises to the secreted. The protein resides in the virion membrane. It is found in the host endoplasmic reticulum membrane. The catalysed reaction is Selective hydrolysis of -Xaa-Xaa-|-Yaa- bonds in which each of the Xaa can be either Arg or Lys and Yaa can be either Ser or Ala.. It carries out the reaction RNA(n) + a ribonucleoside 5'-triphosphate = RNA(n+1) + diphosphate. The enzyme catalyses a ribonucleoside 5'-triphosphate + H2O = a ribonucleoside 5'-diphosphate + phosphate + H(+). It catalyses the reaction ATP + H2O = ADP + phosphate + H(+). The catalysed reaction is a 5'-end (5'-triphosphoguanosine)-ribonucleoside in mRNA + S-adenosyl-L-methionine = a 5'-end (N(7)-methyl 5'-triphosphoguanosine)-ribonucleoside in mRNA + S-adenosyl-L-homocysteine. It carries out the reaction a 5'-end (N(7)-methyl 5'-triphosphoguanosine)-ribonucleoside in mRNA + S-adenosyl-L-methionine = a 5'-end (N(7)-methyl 5'-triphosphoguanosine)-(2'-O-methyl-ribonucleoside) in mRNA + S-adenosyl-L-homocysteine + H(+). In terms of biological role, plays a role in virus budding by binding to the cell membrane and gathering the viral RNA into a nucleocapsid that forms the core of a mature virus particle. During virus entry, may induce genome penetration into the host cytoplasm after hemifusion induced by the surface proteins. Can migrate to the cell nucleus where it modulates host functions. Its function is as follows. Inhibits RNA silencing by interfering with host Dicer. Prevents premature fusion activity of envelope proteins in trans-Golgi by binding to envelope protein E at pH6.0. After virion release in extracellular space, gets dissociated from E dimers. Functionally, acts as a chaperone for envelope protein E during intracellular virion assembly by masking and inactivating envelope protein E fusion peptide. prM is the only viral peptide matured by host furin in the trans-Golgi network probably to avoid catastrophic activation of the viral fusion activity in acidic Golgi compartment prior to virion release. prM-E cleavage is inefficient, and many virions are only partially matured. These uncleaved prM would play a role in immune evasion. In terms of biological role, may play a role in virus budding. Exerts cytotoxic effects by activating a mitochondrial apoptotic pathway through M ectodomain. May display a viroporin activity. Its function is as follows. Binds to host cell surface receptor and mediates fusion between viral and cellular membranes. Envelope protein is synthesized in the endoplasmic reticulum in the form of heterodimer with protein prM. They play a role in virion budding in the ER, and the newly formed immature particle is covered with 60 spikes composed of heterodimer between precursor prM and envelope protein E. The virion is transported to the Golgi apparatus where the low pH causes dissociation of PrM-E heterodimers and formation of E homodimers. prM-E cleavage is inefficient, and many virions are only partially matured. These uncleaved prM would play a role in immune evasion. Involved in immune evasion, pathogenesis and viral replication. Once cleaved off the polyprotein, is targeted to three destinations: the viral replication cycle, the plasma membrane and the extracellular compartment. Essential for viral replication. Required for formation of the replication complex and recruitment of other non-structural proteins to the ER-derived membrane structures. Excreted as a hexameric lipoparticle that plays a role against host immune response. Antagonizing the complement function. Binds to the host macrophages and dendritic cells. Inhibits signal transduction originating from Toll-like receptor 3 (TLR3). Functionally, component of the viral RNA replication complex that functions in virion assembly and antagonizes the host immune response. In terms of biological role, required cofactor for the serine protease function of NS3. May have membrane-destabilizing activity and form viroporins. Its function is as follows. Displays three enzymatic activities: serine protease, NTPase and RNA helicase. NS3 serine protease, in association with NS2B, performs its autocleavage and cleaves the polyprotein at dibasic sites in the cytoplasm: C-prM, NS2A-NS2B, NS2B-NS3, NS3-NS4A, NS4A-2K and NS4B-NS5. NS3 RNA helicase binds RNA and unwinds dsRNA in the 3' to 5' direction. Regulates the ATPase activity of the NS3 helicase activity. NS4A allows NS3 helicase to conserve energy during unwinding. Functionally, functions as a signal peptide for NS4B and is required for the interferon antagonism activity of the latter. In terms of biological role, induces the formation of ER-derived membrane vesicles where the viral replication takes place. Inhibits interferon (IFN)-induced host STAT1 phosphorylation and nuclear translocation, thereby preventing the establishment of cellular antiviral state by blocking the IFN-alpha/beta pathway. Inhibits STAT2 translocation in the nucleus after IFN-alpha treatment. Its function is as follows. Replicates the viral (+) and (-) genome, and performs the capping of genomes in the cytoplasm. NS5 methylates viral RNA cap at guanine N-7 and ribose 2'-O positions. Besides its role in RNA genome replication, also prevents the establishment of cellular antiviral state by blocking the interferon-alpha/beta (IFN-alpha/beta) signaling pathway. Inhibits host TYK2 and STAT2 phosphorylation, thereby preventing activation of JAK-STAT signaling pathway. This chain is Genome polyprotein, found in Homo sapiens (Human).